The primary structure comprises 225 residues: UPF0700 transmembrane protein YoaK (225 aa).

The next 6 membrane-spanning stretches (helical) occupy residues 10–30 (LLSL…LSLG), 56–76 (VFNS…ATLM), 99–119 (ILFV…HILI), 137–157 (GIAG…LEDI), 174–194 (TVLR…VALA), and 197–217 (DFYH…MMTA).

Belongs to the UPF0700 family.

It localises to the cell membrane. The protein is UPF0700 transmembrane protein YoaK (yoaK) of Bacillus subtilis (strain 168).